The following is a 130-amino-acid chain: S-adenosylmethionine decarboxylase proenzyme (130 aa).

The active-site Schiff-base intermediate with substrate; via pyruvic acid is the serine 66. Residue serine 66 is modified to Pyruvic acid (Ser); by autocatalysis. Histidine 71 (proton acceptor; for processing activity) is an active-site residue. The active-site Proton donor; for catalytic activity is cysteine 86.

The protein belongs to the prokaryotic AdoMetDC family. Type 1 subfamily. Heterotetramer of two alpha and two beta chains arranged as a dimer of alpha/beta heterodimers. Pyruvate is required as a cofactor. In terms of processing, is synthesized initially as an inactive proenzyme. Formation of the active enzyme involves a self-maturation process in which the active site pyruvoyl group is generated from an internal serine residue via an autocatalytic post-translational modification. Two non-identical subunits are generated from the proenzyme in this reaction, and the pyruvate is formed at the N-terminus of the alpha chain, which is derived from the carboxyl end of the proenzyme. The post-translation cleavage follows an unusual pathway, termed non-hydrolytic serinolysis, in which the side chain hydroxyl group of the serine supplies its oxygen atom to form the C-terminus of the beta chain, while the remainder of the serine residue undergoes an oxidative deamination to produce ammonia and the pyruvoyl group blocking the N-terminus of the alpha chain.

The catalysed reaction is S-adenosyl-L-methionine + H(+) = S-adenosyl 3-(methylsulfanyl)propylamine + CO2. It functions in the pathway amine and polyamine biosynthesis; S-adenosylmethioninamine biosynthesis; S-adenosylmethioninamine from S-adenosyl-L-methionine: step 1/1. Its function is as follows. Catalyzes the decarboxylation of S-adenosylmethionine to S-adenosylmethioninamine (dcAdoMet), the propylamine donor required for the synthesis of the polyamines spermine and spermidine from the diamine putrescine. The polypeptide is S-adenosylmethionine decarboxylase proenzyme (Bacillus cereus (strain ATCC 10987 / NRS 248)).